The chain runs to 485 residues: UDP-N-acetylmuramate--L-alanine ligase (485 aa).

Gly112 to Thr118 lines the ATP pocket.

Belongs to the MurCDEF family.

The protein resides in the cytoplasm. It catalyses the reaction UDP-N-acetyl-alpha-D-muramate + L-alanine + ATP = UDP-N-acetyl-alpha-D-muramoyl-L-alanine + ADP + phosphate + H(+). It participates in cell wall biogenesis; peptidoglycan biosynthesis. Cell wall formation. This is UDP-N-acetylmuramate--L-alanine ligase from Variovorax paradoxus (strain S110).